Reading from the N-terminus, the 193-residue chain is Ion-translocating oxidoreductase complex subunit A (193 aa).

The next 6 membrane-spanning stretches (helical) occupy residues 5–25 (LLLL…FLGL), 39–59 (VGMG…SYLM), 63–83 (ILIP…VIAV), 102–122 (LLGI…VALL), 134–154 (IIYG…FAAM), and 171–191 (SIAM…TGLI).

The protein belongs to the NqrDE/RnfAE family. As to quaternary structure, the complex is composed of six subunits: RnfA, RnfB, RnfC, RnfD, RnfE and RnfG.

It is found in the cell inner membrane. Part of a membrane-bound complex that couples electron transfer with translocation of ions across the membrane. The polypeptide is Ion-translocating oxidoreductase complex subunit A (Aeromonas salmonicida (strain A449)).